The primary structure comprises 257 residues: GTP cyclohydrolase 1 type 2 homolog (257 aa).

A divalent metal cation contacts are provided by His-65, Asp-103, His-221, and Glu-224.

Belongs to the GTP cyclohydrolase I type 2/NIF3 family. As to quaternary structure, homohexamer.

The chain is GTP cyclohydrolase 1 type 2 homolog (ykiD) from Lactococcus lactis subsp. lactis (strain IL1403) (Streptococcus lactis).